The chain runs to 189 residues: Hypoxanthine/guanine phosphoribosyltransferase (189 aa).

The protein belongs to the purine/pyrimidine phosphoribosyltransferase family. Archaeal HPRT subfamily. As to quaternary structure, homodimer.

The protein localises to the cytoplasm. The catalysed reaction is IMP + diphosphate = hypoxanthine + 5-phospho-alpha-D-ribose 1-diphosphate. It catalyses the reaction GMP + diphosphate = guanine + 5-phospho-alpha-D-ribose 1-diphosphate. It participates in purine metabolism; IMP biosynthesis via salvage pathway; IMP from hypoxanthine: step 1/1. Catalyzes a salvage reaction resulting in the formation of IMP that is energically less costly than de novo synthesis. In Methanothermus fervidus (strain ATCC 43054 / DSM 2088 / JCM 10308 / V24 S), this protein is Hypoxanthine/guanine phosphoribosyltransferase.